Here is a 204-residue protein sequence, read N- to C-terminus: Outer-membrane lipoprotein carrier protein (204 aa).

A signal peptide spans 1 to 21; sequence MKKYLNLTALLLVGISNVTWA.

Belongs to the LolA family. Monomer.

The protein resides in the periplasm. In terms of biological role, participates in the translocation of lipoproteins from the inner membrane to the outer membrane. Only forms a complex with a lipoprotein if the residue after the N-terminal Cys is not an aspartate (The Asp acts as a targeting signal to indicate that the lipoprotein should stay in the inner membrane). The sequence is that of Outer-membrane lipoprotein carrier protein from Histophilus somni (strain 2336) (Haemophilus somnus).